Here is a 476-residue protein sequence, read N- to C-terminus: Zinc finger protein 563 (476 aa).

In terms of domain architecture, KRAB spans 4-96; sequence VAFEDVAVNF…IRDSIVNNSI (93 aa). The C2H2-type 1; degenerate zinc finger occupies 101–125; the sequence is DPCQSAECEEVIMGHLSLNSHIRVD. The C2H2-type 2; degenerate zinc finger occupies 169 to 191; it reads YECKECGKTFSSRRNLRRHMVVQ. C2H2-type zinc fingers lie at residues 197–219, 225–247, 253–275, 281–303, 309–331, 337–359, 365–387, 393–415, 421–443, and 449–471; these read YKCK…ERTH, YECK…ERMH, YECK…ERTH, YTCK…ETTH, YECK…MKRH, HKCK…ERIH, YECK…MIMH, HKCK…EKSH, YECK…MVMH, and NKCK…EKTH.

It belongs to the krueppel C2H2-type zinc-finger protein family.

The protein resides in the nucleus. In terms of biological role, may be involved in transcriptional regulation. This is Zinc finger protein 563 (ZNF563) from Homo sapiens (Human).